The following is a 440-amino-acid chain: Chromosomal replication initiator protein DnaA (440 aa).

The domain I, interacts with DnaA modulators stretch occupies residues 1 to 69; that stretch reads MKERILQEIK…VKVVLGNDAT (69 aa). The domain II stretch occupies residues 69 to 96; it reads TFEITYEAFEPHSSYSEPLVKKRAVLLT. A domain III, AAA+ region region spans residues 97 to 313; the sequence is PLNPDYTFEN…GAIIKLLVYK (217 aa). Residues G140, G142, K143, and T144 each coordinate ATP. Residues 314–440 form a domain IV, binds dsDNA region; the sequence is ETTGKEVDLR…GEISKRALSG (127 aa).

This sequence belongs to the DnaA family. As to quaternary structure, oligomerizes as a right-handed, spiral filament on DNA at oriC.

The protein resides in the cytoplasm. Plays an essential role in the initiation and regulation of chromosomal replication. ATP-DnaA binds to the origin of replication (oriC) to initiate formation of the DNA replication initiation complex once per cell cycle. Binds the DnaA box (a 9 base pair repeat at the origin) and separates the double-stranded (ds)DNA. Forms a right-handed helical filament on oriC DNA; dsDNA binds to the exterior of the filament while single-stranded (ss)DNA is stabiized in the filament's interior. The ATP-DnaA-oriC complex binds and stabilizes one strand of the AT-rich DNA unwinding element (DUE), permitting loading of DNA polymerase. After initiation quickly degrades to an ADP-DnaA complex that is not apt for DNA replication. Binds acidic phospholipids. The sequence is that of Chromosomal replication initiator protein DnaA from Thermotoga petrophila (strain ATCC BAA-488 / DSM 13995 / JCM 10881 / RKU-1).